Here is a 172-residue protein sequence, read N- to C-terminus: NAD(P)H-quinone oxidoreductase subunit I, chloroplastic (172 aa).

2 consecutive 4Fe-4S ferredoxin-type domains span residues 55-84 (GRIHFEFDKCIACEVCVRVCPIDLPVVDWK) and 95-124 (LNYSIDFGICIFCGNCVEYCPTNCLSMTEE). 8 residues coordinate [4Fe-4S] cluster: Cys64, Cys67, Cys70, Cys74, Cys104, Cys107, Cys110, and Cys114.

This sequence belongs to the complex I 23 kDa subunit family. In terms of assembly, NDH is composed of at least 16 different subunits, 5 of which are encoded in the nucleus. It depends on [4Fe-4S] cluster as a cofactor.

Its subcellular location is the plastid. The protein resides in the chloroplast thylakoid membrane. The enzyme catalyses a plastoquinone + NADH + (n+1) H(+)(in) = a plastoquinol + NAD(+) + n H(+)(out). It catalyses the reaction a plastoquinone + NADPH + (n+1) H(+)(in) = a plastoquinol + NADP(+) + n H(+)(out). In terms of biological role, NDH shuttles electrons from NAD(P)H:plastoquinone, via FMN and iron-sulfur (Fe-S) centers, to quinones in the photosynthetic chain and possibly in a chloroplast respiratory chain. The immediate electron acceptor for the enzyme in this species is believed to be plastoquinone. Couples the redox reaction to proton translocation, and thus conserves the redox energy in a proton gradient. This is NAD(P)H-quinone oxidoreductase subunit I, chloroplastic from Arabidopsis thaliana (Mouse-ear cress).